We begin with the raw amino-acid sequence, 621 residues long: Glutathione-regulated potassium-efflux system protein KefC (621 aa).

12 helical membrane passes run alanine 9–glycine 29, serine 30–asparagine 50, alanine 54–leucine 74, glycine 90–leucine 110, valine 114–methionine 134, phenylalanine 149–leucine 169, leucine 178–leucine 198, leucine 232–leucine 252, glycine 270–serine 290, isoleucine 296–glutamine 316, arginine 326–alanine 346, and alanine 359–threonine 379. An RCK N-terminal domain is found at glutamine 399 to threonine 518. The interval glycine 598–alanine 621 is disordered.

It belongs to the monovalent cation:proton antiporter 2 (CPA2) transporter (TC 2.A.37) family. KefC subfamily. In terms of assembly, homodimer. Interacts with the regulatory subunit KefF.

It localises to the cell inner membrane. Functionally, pore-forming subunit of a potassium efflux system that confers protection against electrophiles. Catalyzes K(+)/H(+) antiport. This Klebsiella aerogenes (Enterobacter aerogenes) protein is Glutathione-regulated potassium-efflux system protein KefC.